A 188-amino-acid chain; its full sequence is MSDEDFDLDLDDLKRRMDGALASLRTEFASLRTGRASASMLEPVMVDAYGQKTPINQVGTVNVPEPRMVTINVWDKSLVGKVEKAIRESGLGINPQLNGTIIMLPIPELNEERRRELTKVAAQYAEHARVAIRNVRRDGMDQLKKFKADGMSEDDHKIWSDEVQALTDAEIKKVDDALENKQSEIMQV.

It belongs to the RRF family.

The protein resides in the cytoplasm. Responsible for the release of ribosomes from messenger RNA at the termination of protein biosynthesis. May increase the efficiency of translation by recycling ribosomes from one round of translation to another. The chain is Ribosome-recycling factor from Dinoroseobacter shibae (strain DSM 16493 / NCIMB 14021 / DFL 12).